Here is a 328-residue protein sequence, read N- to C-terminus: 4-hydroxythreonine-4-phosphate dehydrogenase (328 aa).

The substrate site is built by H134 and T135. Residues H164, H209, and H265 each contribute to the a divalent metal cation site. Positions 273, 282, and 291 each coordinate substrate.

The protein belongs to the PdxA family. In terms of assembly, homodimer. It depends on Zn(2+) as a cofactor. Mg(2+) is required as a cofactor. Requires Co(2+) as cofactor.

It localises to the cytoplasm. It catalyses the reaction 4-(phosphooxy)-L-threonine + NAD(+) = 3-amino-2-oxopropyl phosphate + CO2 + NADH. The protein operates within cofactor biosynthesis; pyridoxine 5'-phosphate biosynthesis; pyridoxine 5'-phosphate from D-erythrose 4-phosphate: step 4/5. Functionally, catalyzes the NAD(P)-dependent oxidation of 4-(phosphooxy)-L-threonine (HTP) into 2-amino-3-oxo-4-(phosphooxy)butyric acid which spontaneously decarboxylates to form 3-amino-2-oxopropyl phosphate (AHAP). In Vibrio vulnificus (strain YJ016), this protein is 4-hydroxythreonine-4-phosphate dehydrogenase.